Reading from the N-terminus, the 156-residue chain is ATP synthase subunit b (156 aa).

A helical membrane pass occupies residues 11–31 (AIAFFIFVVFCMKYVWPPLMA).

Belongs to the ATPase B chain family. F-type ATPases have 2 components, F(1) - the catalytic core - and F(0) - the membrane proton channel. F(1) has five subunits: alpha(3), beta(3), gamma(1), delta(1), epsilon(1). F(0) has three main subunits: a(1), b(2) and c(10-14). The alpha and beta chains form an alternating ring which encloses part of the gamma chain. F(1) is attached to F(0) by a central stalk formed by the gamma and epsilon chains, while a peripheral stalk is formed by the delta and b chains.

Its subcellular location is the cell inner membrane. F(1)F(0) ATP synthase produces ATP from ADP in the presence of a proton or sodium gradient. F-type ATPases consist of two structural domains, F(1) containing the extramembraneous catalytic core and F(0) containing the membrane proton channel, linked together by a central stalk and a peripheral stalk. During catalysis, ATP synthesis in the catalytic domain of F(1) is coupled via a rotary mechanism of the central stalk subunits to proton translocation. Functionally, component of the F(0) channel, it forms part of the peripheral stalk, linking F(1) to F(0). The sequence is that of ATP synthase subunit b from Aeromonas hydrophila subsp. hydrophila (strain ATCC 7966 / DSM 30187 / BCRC 13018 / CCUG 14551 / JCM 1027 / KCTC 2358 / NCIMB 9240 / NCTC 8049).